Consider the following 269-residue polypeptide: 23S rRNA (adenosine(1067)-2'-O)-methyltransferase (269 aa).

S-adenosyl-L-methionine is bound by residues Arg-135, Arg-165, Leu-195, Gly-218, Ile-238, and Leu-247.

It belongs to the class IV-like SAM-binding methyltransferase superfamily. RNA methyltransferase TsnR/AvirB family. As to quaternary structure, homodimer.

It catalyses the reaction adenosine(1067) in 23S rRNA + S-adenosyl-L-methionine = 2'-O-methyladenosine(1067) in 23S rRNA + S-adenosyl-L-homocysteine + H(+). Functionally, specifically methylates the adenosine-1067 in 23S ribosomal RNA. Confers resistance to antibiotic thiostrepton. The polypeptide is 23S rRNA (adenosine(1067)-2'-O)-methyltransferase (tsnR) (Streptomyces azureus).